Reading from the N-terminus, the 291-residue chain is tRNA dimethylallyltransferase (291 aa).

9–16 (GPTASGKT) provides a ligand contact to ATP. 11–16 (TASGKT) contributes to the substrate binding site. The interval 34-37 (DSLQ) is interaction with substrate tRNA.

The protein belongs to the IPP transferase family. Monomer. It depends on Mg(2+) as a cofactor.

It carries out the reaction adenosine(37) in tRNA + dimethylallyl diphosphate = N(6)-dimethylallyladenosine(37) in tRNA + diphosphate. In terms of biological role, catalyzes the transfer of a dimethylallyl group onto the adenine at position 37 in tRNAs that read codons beginning with uridine, leading to the formation of N6-(dimethylallyl)adenosine (i(6)A). This is tRNA dimethylallyltransferase from Aster yellows witches'-broom phytoplasma (strain AYWB).